The following is a 256-amino-acid chain: Ribosomal RNA small subunit methyltransferase A (256 aa).

The S-adenosyl-L-methionine site is built by His12, Leu14, Gly39, Glu60, Asp83, and Asn101.

Belongs to the class I-like SAM-binding methyltransferase superfamily. rRNA adenine N(6)-methyltransferase family. RsmA subfamily.

It is found in the cytoplasm. It carries out the reaction adenosine(1518)/adenosine(1519) in 16S rRNA + 4 S-adenosyl-L-methionine = N(6)-dimethyladenosine(1518)/N(6)-dimethyladenosine(1519) in 16S rRNA + 4 S-adenosyl-L-homocysteine + 4 H(+). Its function is as follows. Specifically dimethylates two adjacent adenosines (A1518 and A1519) in the loop of a conserved hairpin near the 3'-end of 16S rRNA in the 30S particle. May play a critical role in biogenesis of 30S subunits. The polypeptide is Ribosomal RNA small subunit methyltransferase A (Nitrosomonas eutropha (strain DSM 101675 / C91 / Nm57)).